A 365-amino-acid chain; its full sequence is Cobalt-precorrin-5B C(1)-methyltransferase (365 aa).

Belongs to the CbiD family.

It catalyses the reaction Co-precorrin-5B + S-adenosyl-L-methionine = Co-precorrin-6A + S-adenosyl-L-homocysteine. It participates in cofactor biosynthesis; adenosylcobalamin biosynthesis; cob(II)yrinate a,c-diamide from sirohydrochlorin (anaerobic route): step 6/10. In terms of biological role, catalyzes the methylation of C-1 in cobalt-precorrin-5B to form cobalt-precorrin-6A. This is Cobalt-precorrin-5B C(1)-methyltransferase from Methanococcus maripaludis (strain DSM 14266 / JCM 13030 / NBRC 101832 / S2 / LL).